We begin with the raw amino-acid sequence, 631 residues long: Phosphomethylpyrimidine synthase (631 aa).

Substrate contacts are provided by residues Asn-239, Met-268, Tyr-297, His-333, 353 to 355, 394 to 397, and Glu-433; these read SRG and DGLR. His-437 serves as a coordination point for Zn(2+). Tyr-460 is a binding site for substrate. His-501 contributes to the Zn(2+) binding site. [4Fe-4S] cluster contacts are provided by Cys-581, Cys-584, and Cys-589.

This sequence belongs to the ThiC family. As to quaternary structure, homodimer. [4Fe-4S] cluster is required as a cofactor.

The catalysed reaction is 5-amino-1-(5-phospho-beta-D-ribosyl)imidazole + S-adenosyl-L-methionine = 4-amino-2-methyl-5-(phosphooxymethyl)pyrimidine + CO + 5'-deoxyadenosine + formate + L-methionine + 3 H(+). It participates in cofactor biosynthesis; thiamine diphosphate biosynthesis. Its function is as follows. Catalyzes the synthesis of the hydroxymethylpyrimidine phosphate (HMP-P) moiety of thiamine from aminoimidazole ribotide (AIR) in a radical S-adenosyl-L-methionine (SAM)-dependent reaction. The protein is Phosphomethylpyrimidine synthase of Escherichia coli (strain SMS-3-5 / SECEC).